A 162-amino-acid polypeptide reads, in one-letter code: Probable metalloprotease y4jG (162 aa).

Residues 9 to 147 (TVALPRDCVS…YRLDAKANWN (139 aa)) enclose the MPN domain. His-94, His-96, and Asp-107 together coordinate Zn(2+).

This sequence belongs to the peptidase M67B family.

The sequence is that of Probable metalloprotease y4jG from Sinorhizobium fredii (strain NBRC 101917 / NGR234).